We begin with the raw amino-acid sequence, 483 residues long: ATP-dependent RNA helicase dbp-5 (483 aa).

Residues 1–47 form a disordered region; sequence MADLASRITKPDEAPAAAPEAAPVSAPASEEPKAPENETSIEESQSN. A compositionally biased stretch (low complexity) spans 14-29; the sequence is APAAAPEAAPVSAPAS. Residues 74 to 102 carry the Q motif motif; sequence SSFDELGLPEAVNRGLLAINFKKPSKVQE. Residues 107–276 form the Helicase ATP-binding domain; it reads LMLSDPPRNM…ERFAPNANQM (170 aa). 120-127 is an ATP binding site; it reads SQSGTGKT. The DEAD box motif lies at 223-226; the sequence is DEAD. One can recognise a Helicase C-terminal domain in the interval 304–455; the sequence is ILCKLYGLMT…LIQLNPNDLD (152 aa).

This sequence belongs to the DEAD box helicase family. DDX19/DBP5 subfamily. As to quaternary structure, associates with the nuclear pore complex.

It is found in the cytoplasm. The protein resides in the nucleus. The protein localises to the nuclear pore complex. It localises to the nucleus membrane. It catalyses the reaction ATP + H2O = ADP + phosphate + H(+). Its function is as follows. ATP-dependent RNA helicase associated with the nuclear pore complex and essential for mRNA export from the nucleus. May participate in a terminal step of mRNA export through the removal of proteins that accompany mRNA through the nucleopore complex. May also be involved in early transcription. The protein is ATP-dependent RNA helicase dbp-5 (dbp-5) of Neurospora crassa (strain ATCC 24698 / 74-OR23-1A / CBS 708.71 / DSM 1257 / FGSC 987).